Consider the following 328-residue polypeptide: Probable cytosolic iron-sulfur protein assembly protein 1 (328 aa).

WD repeat units follow at residues 12-49 (LHGD…LVEE), 54-93 (AHKK…YSGE), 102-141 (GHEN…EEFE), 148-187 (EHSQ…WECA), 192-233 (GHGG…ADVF), 246-284 (VHTR…RWEV), and 291-328 (AHTV…LREE).

It belongs to the WD repeat CIA1 family. In terms of assembly, interacts with NAR1.

The protein localises to the cytoplasm. The protein resides in the nucleus. In terms of biological role, essential component of the cytosolic iron-sulfur (Fe/S) protein assembly machinery. Required for the maturation of extramitochondrial Fe/S proteins. This chain is Probable cytosolic iron-sulfur protein assembly protein 1, found in Eremothecium gossypii (strain ATCC 10895 / CBS 109.51 / FGSC 9923 / NRRL Y-1056) (Yeast).